The primary structure comprises 312 residues: uncharacterized protein (312 aa).

Transmembrane regions (helical) follow at residues Ala4 to Glu24 and Tyr286 to Leu306.

It localises to the cell membrane. This is an uncharacterized protein from Methanocaldococcus jannaschii (strain ATCC 43067 / DSM 2661 / JAL-1 / JCM 10045 / NBRC 100440) (Methanococcus jannaschii).